Consider the following 349-residue polypeptide: Dihydroorotate dehydrogenase (quinone) (349 aa).

FMN contacts are provided by residues P59–K63 and T83. K63 contacts substrate. Residue N108–F112 coordinates substrate. The FMN site is built by N142 and N173. N173 lines the substrate pocket. S176 (nucleophile) is an active-site residue. A substrate-binding site is contributed by N178. 2 residues coordinate FMN: K212 and S240. Residue N241–T242 coordinates substrate. Residues G262, G291, and Y312 to S313 contribute to the FMN site.

The protein belongs to the dihydroorotate dehydrogenase family. Type 2 subfamily. As to quaternary structure, monomer. It depends on FMN as a cofactor.

It localises to the cell membrane. It carries out the reaction (S)-dihydroorotate + a quinone = orotate + a quinol. It participates in pyrimidine metabolism; UMP biosynthesis via de novo pathway; orotate from (S)-dihydroorotate (quinone route): step 1/1. Functionally, catalyzes the conversion of dihydroorotate to orotate with quinone as electron acceptor. This Novosphingobium aromaticivorans (strain ATCC 700278 / DSM 12444 / CCUG 56034 / CIP 105152 / NBRC 16084 / F199) protein is Dihydroorotate dehydrogenase (quinone).